We begin with the raw amino-acid sequence, 395 residues long: Probable FMNH2-dependent monooxygenase SfnC (395 aa).

Involved in the dimethyl sulfide degradation pathway. The polypeptide is Probable FMNH2-dependent monooxygenase SfnC (Pseudomonas putida (Arthrobacter siderocapsulatus)).